We begin with the raw amino-acid sequence, 417 residues long: Serine--tRNA ligase (417 aa).

226–228 (TSE) serves as a coordination point for L-serine. ATP-binding positions include 257-259 (RRE) and V273. E280 lines the L-serine pocket. 344–347 (ELTS) lines the ATP pocket. An L-serine-binding site is contributed by T379.

The protein belongs to the class-II aminoacyl-tRNA synthetase family. Type-1 seryl-tRNA synthetase subfamily. Homodimer. The tRNA molecule binds across the dimer.

The protein resides in the cytoplasm. The catalysed reaction is tRNA(Ser) + L-serine + ATP = L-seryl-tRNA(Ser) + AMP + diphosphate + H(+). It carries out the reaction tRNA(Sec) + L-serine + ATP = L-seryl-tRNA(Sec) + AMP + diphosphate + H(+). Its pathway is aminoacyl-tRNA biosynthesis; selenocysteinyl-tRNA(Sec) biosynthesis; L-seryl-tRNA(Sec) from L-serine and tRNA(Sec): step 1/1. Its function is as follows. Catalyzes the attachment of serine to tRNA(Ser). Is also able to aminoacylate tRNA(Sec) with serine, to form the misacylated tRNA L-seryl-tRNA(Sec), which will be further converted into selenocysteinyl-tRNA(Sec). In Mycobacterium sp. (strain KMS), this protein is Serine--tRNA ligase.